A 446-amino-acid chain; its full sequence is Exodeoxyribonuclease 7 large subunit (446 aa).

The protein belongs to the XseA family. Heterooligomer composed of large and small subunits.

It is found in the cytoplasm. The enzyme catalyses Exonucleolytic cleavage in either 5'- to 3'- or 3'- to 5'-direction to yield nucleoside 5'-phosphates.. Its function is as follows. Bidirectionally degrades single-stranded DNA into large acid-insoluble oligonucleotides, which are then degraded further into small acid-soluble oligonucleotides. The chain is Exodeoxyribonuclease 7 large subunit from Streptococcus pneumoniae (strain ATCC 700669 / Spain 23F-1).